We begin with the raw amino-acid sequence, 471 residues long: Trigger factor (471 aa).

A PPIase FKBP-type domain is found at 166 to 245 (DDFITIDINA…LTAVKVRELP (80 aa)). The segment at 442–471 (AAGVTGEDDDTEAEEERVTVSADDPGAARF) is disordered. Over residues 447–456 (GEDDDTEAEE) the composition is skewed to acidic residues.

This sequence belongs to the FKBP-type PPIase family. Tig subfamily.

It is found in the cytoplasm. The catalysed reaction is [protein]-peptidylproline (omega=180) = [protein]-peptidylproline (omega=0). In terms of biological role, involved in protein export. Acts as a chaperone by maintaining the newly synthesized protein in an open conformation. Functions as a peptidyl-prolyl cis-trans isomerase. This is Trigger factor from Renibacterium salmoninarum (strain ATCC 33209 / DSM 20767 / JCM 11484 / NBRC 15589 / NCIMB 2235).